We begin with the raw amino-acid sequence, 1055 residues long: Activated CDC42 kinase 1 (1055 aa).

The segment at M1–G110 is SAM-like domain. The tract at residues S91–G110 is disordered. Phosphothreonine is present on T113. The 260-residue stretch at L126 to L385 folds into the Protein kinase domain. ATP contacts are provided by residues L132–V140 and K158. The active-site Proton acceptor is D252. Y284 is subject to Phosphotyrosine; by SRC and autocatalysis. The SH3 domain occupies A388–G448. One can recognise a CRIB domain in the interval I454 to G466. A disordered region spans residues R505 to K548. Residues P518 and Y533 each carry the phosphotyrosine modification. Positions D638 to S667 are required for interaction with SRC. The interval P647–Y650 is required for interaction with NEDD4. The interval T737–A855 is disordered. The interval G748–L891 is EBD domain. Pro residues-rich tracts occupy residues Q753–P764 and P787–P798. The segment covering P817 to G827 has biased composition (low complexity). Y842 is subject to Phosphotyrosine. R854 bears the Omega-N-methylarginine mark. 2 positions are modified to phosphotyrosine: Y874 and Y887. S896 is modified (phosphoserine). The interval S896–L952 is disordered. Pro residues predominate over residues L903–A918. The UBA domain maps to P973 to E1013.

This sequence belongs to the protein kinase superfamily. Tyr protein kinase family. Homodimer. Interacts with CSPG4 (activated). Interacts with MERTK (activated); stimulates autophosphorylation. May interact (phosphorylated) with HSP90AB1; maintains kinase activity. Interacts with NPHP1. Interacts with SNX9 (via SH3 domain). Interacts with SRC (via SH2 and SH3 domain). Part of a collagen stimulated complex involved in cell migration composed of CDC42, CRK, TNK2 and BCAR1/p130cas. Interacts with BCAR1/p130cas via SH3 domains. Forms complexes with GRB2 and numerous receptor tyrosine kinases (RTK) including LTK, AXL or PDGFRL, in which GRB2 promotes RTK recruitment by TNK2. Interacts with CDC42. Interacts with EGFR, and this interaction is dependent on EGF stimulation and kinase activity of EGFR. Interacts (via kinase domain) with AKT1. Interacts with NEDD4 (via WW3 domain). NEDD4L and EGF promote association with NEDD4. Mg(2+) serves as cofactor. In terms of processing, autophosphorylation regulates kinase activity. Phosphorylation on Tyr-533 is required for interaction with SRC and is observed during association with clathrin-coated pits. Polyubiquitinated by NEDD4 and NEDD4L. Degradation can be induced by EGF and is lysosome-dependent. In terms of tissue distribution, ubiquitously present in all tissues tested. Highly expressed in the adult central nervous system (CNS); hippocampus, neocortex, and cerebellum, both at dendritic spines and presynaptic axon terminals. Levels are strongly increased during enhanced neural activity.

Its subcellular location is the cell membrane. It localises to the nucleus. The protein resides in the endosome. It is found in the cell junction. The protein localises to the adherens junction. Its subcellular location is the cytoplasmic vesicle membrane. It localises to the cytoplasmic vesicle. The protein resides in the clathrin-coated vesicle. It is found in the membrane. The protein localises to the clathrin-coated pit. Its subcellular location is the cytoplasm. It localises to the cytosol. It carries out the reaction L-tyrosyl-[protein] + ATP = O-phospho-L-tyrosyl-[protein] + ADP + H(+). It catalyses the reaction L-seryl-[protein] + ATP = O-phospho-L-seryl-[protein] + ADP + H(+). The catalysed reaction is L-threonyl-[protein] + ATP = O-phospho-L-threonyl-[protein] + ADP + H(+). Non-receptor tyrosine-protein and serine/threonine-protein kinase that is implicated in cell spreading and migration, cell survival, cell growth and proliferation. Transduces extracellular signals to cytosolic and nuclear effectors. Phosphorylates AKT1, AR, MCF2, WASL and WWOX. Implicated in trafficking and clathrin-mediated endocytosis through binding to epidermal growth factor receptor (EGFR) and clathrin. Binds to both poly- and mono-ubiquitin and regulates ligand-induced degradation of EGFR, thereby contributing to the accumulation of EGFR at the limiting membrane of early endosomes. Downstream effector of CDC42 which mediates CDC42-dependent cell migration via phosphorylation of BCAR1. May be involved both in adult synaptic function and plasticity and in brain development. Activates AKT1 by phosphorylating it on 'Tyr-176'. Phosphorylates AR on 'Tyr-267' and 'Tyr-363' thereby promoting its recruitment to androgen-responsive enhancers (AREs). Phosphorylates WWOX on 'Tyr-287'. Phosphorylates MCF2, thereby enhancing its activity as a guanine nucleotide exchange factor (GEF) toward Rho family proteins. Contributes to the control of AXL receptor levels. Confers metastatic properties on cancer cells and promotes tumor growth by negatively regulating tumor suppressor such as WWOX and positively regulating pro-survival factors such as AKT1 and AR. This chain is Activated CDC42 kinase 1 (Tnk2), found in Mus musculus (Mouse).